An 85-amino-acid polypeptide reads, in one-letter code: Small ribosomal subunit protein uS17 (85 aa).

The protein belongs to the universal ribosomal protein uS17 family. Part of the 30S ribosomal subunit.

Functionally, one of the primary rRNA binding proteins, it binds specifically to the 5'-end of 16S ribosomal RNA. The sequence is that of Small ribosomal subunit protein uS17 from Citrifermentans bemidjiense (strain ATCC BAA-1014 / DSM 16622 / JCM 12645 / Bem) (Geobacter bemidjiensis).